The sequence spans 346 residues: NADH-ubiquinone oxidoreductase chain 2 (346 aa).

The next 11 helical transmembrane spans lie at 1–21, 26–46, 60–80, 96–116, 122–142, 151–171, 178–198, 199–219, 242–262, 274–294, and 320–340; these read MSPY…MLIS, WVFM…ILVW, FIVQ…SLSG, MMIM…YWVV, LNYI…LAVL, SSML…GGLG, LLAF…VAGS, LLGL…FSIL, VLLG…GFFG, LLLG…FYYL, and LSGL…LVGG.

It belongs to the complex I subunit 2 family.

Its subcellular location is the mitochondrion inner membrane. It carries out the reaction a ubiquinone + NADH + 5 H(+)(in) = a ubiquinol + NAD(+) + 4 H(+)(out). Core subunit of the mitochondrial membrane respiratory chain NADH dehydrogenase (Complex I) that is believed to belong to the minimal assembly required for catalysis. Complex I functions in the transfer of electrons from NADH to the respiratory chain. The immediate electron acceptor for the enzyme is believed to be ubiquinone. In Branchiostoma lanceolatum (Common lancelet), this protein is NADH-ubiquinone oxidoreductase chain 2 (ND2).